The primary structure comprises 265 residues: RWD domain-containing protein 3 (265 aa).

The region spanning 7–114 (EEVAALSAIY…WTQQNLNNLI (108 aa)) is the RWD domain.

It localises to the nucleus. Its subcellular location is the cytoplasm. Enhancer of SUMO conjugation. Increases SUMO conjugation to proteins by promoting the: binding of E1 and E2 enzymes, thioester linkage between SUMO and ube2i/ubc9 and transfer of SUMO to specific target proteins which include hif1a, pias, nfkbia, nr3c1 and top1. Has no effect on ubiquitination. In Xenopus tropicalis (Western clawed frog), this protein is RWD domain-containing protein 3 (rwdd3).